The following is a 195-amino-acid chain: Auxin-responsive protein IAA14 (195 aa).

2 disordered regions span residues 1–61 and 85–107; these read MAAE…SPAS and STAAAAKGKGGGETDQGRKNKGG. An EAR-like (transcriptional repression) motif is present at residues 10–14; that stretch reads LRLGL. Residues 108–191 form the PB1 domain; the sequence is GLYVKVSMDG…SCKKLRIMRG (84 aa).

This sequence belongs to the Aux/IAA family. As to quaternary structure, homodimers and heterodimers. In terms of tissue distribution, highly expressed in flowers. Expressed in etiolated seedlings.

Its subcellular location is the nucleus. Functionally, aux/IAA proteins are short-lived transcriptional factors that function as repressors of early auxin response genes at low auxin concentrations. This is Auxin-responsive protein IAA14 (IAA14) from Oryza sativa subsp. japonica (Rice).